A 471-amino-acid polypeptide reads, in one-letter code: 3-isopropylmalate dehydratase large subunit (471 aa).

Residues Cys-347, Cys-407, and Cys-410 each contribute to the [4Fe-4S] cluster site.

This sequence belongs to the aconitase/IPM isomerase family. LeuC type 1 subfamily. As to quaternary structure, heterodimer of LeuC and LeuD. [4Fe-4S] cluster serves as cofactor.

The catalysed reaction is (2R,3S)-3-isopropylmalate = (2S)-2-isopropylmalate. The protein operates within amino-acid biosynthesis; L-leucine biosynthesis; L-leucine from 3-methyl-2-oxobutanoate: step 2/4. Its function is as follows. Catalyzes the isomerization between 2-isopropylmalate and 3-isopropylmalate, via the formation of 2-isopropylmaleate. The chain is 3-isopropylmalate dehydratase large subunit from Geobacillus thermodenitrificans (strain NG80-2).